A 155-amino-acid polypeptide reads, in one-letter code: 3-hydroxyacyl-[acyl-carrier-protein] dehydratase FabZ (155 aa).

The active site involves His58.

The protein belongs to the thioester dehydratase family. FabZ subfamily.

It localises to the cytoplasm. It carries out the reaction a (3R)-hydroxyacyl-[ACP] = a (2E)-enoyl-[ACP] + H2O. Functionally, involved in unsaturated fatty acids biosynthesis. Catalyzes the dehydration of short chain beta-hydroxyacyl-ACPs and long chain saturated and unsaturated beta-hydroxyacyl-ACPs. The polypeptide is 3-hydroxyacyl-[acyl-carrier-protein] dehydratase FabZ (Rhizobium etli (strain CIAT 652)).